Reading from the N-terminus, the 130-residue chain is Small ribosomal subunit protein uS11 (130 aa).

The tract at residues 1–21 is disordered; the sequence is MAPQSKRSGGRKQKKHVPNGV. The span at 8–17 shows a compositional bias: basic residues; sequence SGGRKQKKHV.

Belongs to the universal ribosomal protein uS11 family. Part of the 30S ribosomal subunit. Interacts with proteins S7 and S18. Binds to IF-3.

Located on the platform of the 30S subunit, it bridges several disparate RNA helices of the 16S rRNA. Forms part of the Shine-Dalgarno cleft in the 70S ribosome. This is Small ribosomal subunit protein uS11 from Acaryochloris marina (strain MBIC 11017).